A 526-amino-acid polypeptide reads, in one-letter code: 3-hydroxy-3-methylglutaryl-coenzyme A reductase 2 (526 aa).

Catalysis depends on charge relay system residues glutamate 193, lysine 325, and aspartate 401. Histidine 499 serves as the catalytic Proton donor. A disordered region spans residues 503–526; it reads NRKTEAPAPQADTISMTHNLPHSD. Residues 514–526 show a composition bias toward polar residues; the sequence is DTISMTHNLPHSD.

It belongs to the HMG-CoA reductase family.

It carries out the reaction (R)-mevalonate + 2 NADP(+) + CoA = (3S)-3-hydroxy-3-methylglutaryl-CoA + 2 NADPH + 2 H(+). The protein operates within metabolic intermediate biosynthesis; (R)-mevalonate biosynthesis; (R)-mevalonate from acetyl-CoA: step 3/3. Its function is as follows. This transmembrane glycoprotein is involved in the control of cholesterol biosynthesis. It is the rate-limiting enzyme of the sterol biosynthesis. This is 3-hydroxy-3-methylglutaryl-coenzyme A reductase 2 (hmgB) from Dictyostelium discoideum (Social amoeba).